The sequence spans 793 residues: MWIQVRTMDGRQTHTVDSLSRLTKVEELRRKIQELFHVEPGLQRLFYRGKQMEDGHTLFDYEVRLNDTIQLLVRQSLVLPHSTKERDSELSDTDSGCCLGQSESDKSSTHGEAAAETDSRPADEDMWDETELGLYKVNEYVDARDTNMGAWFEAQVVRVTRKAPSRDEPCSSTSRPALEEDVIYHVKYDDYPENGVVQMNSRDVRARARTIIKWQDLEVGQVVMLNYNPDNPKERGFWYDAEISRKRETRTARELYANVVLGDDSLNDCRIIFVDEVFKIERPGEGSPMVDNPMRRKSGPSCKHCKDDVNRLCRVCACHLCGGRQDPDKQLMCDECDMAFHIYCLDPPLSSVPSEDEWYCPECRNDASEVVLAGERLRESKKKAKMASATSSSQRDWGKGMACVGRTKECTIVPSNHYGPIPGIPVGTMWRFRVQVSESGVHRPHVAGIHGRSNDGAYSLVLAGGYEDDVDHGNFFTYTGSGGRDLSGNKRTAEQSCDQKLTNTNRALALNCFAPINDQEGAEAKDWRSGKPVRVVRNVKGGKNSKYAPAEGNRYDGIYKVVKYWPEKGKSGFLVWRYLLRRDDDEPGPWTKEGKDRIKKLGLTMQYPEGYLEALANREREKENSKREEEEQQEGGFASPRTGKGKWKRKSAGGGPSRAGSPRRTSKKTKVEPYSLTAQQSSLIREDKSNAKLWNEVLASLKDRPASGSPFQLFLSKVEETFQCICCQELVFRPITTVCQHNVCKDCLDRSFRAQVFSCPACRYDLGRSYAMQVNQPLQTVLNQLFPGYGNGR.

Residues 1-78 (MWIQVRTMDG…IQLLVRQSLV (78 aa)) form the Ubiquitin-like domain. Residues Ser-76, Ser-91, Ser-95, and Ser-165 each carry the phosphoserine modification. The interval 82–124 (STKERDSELSDTDSGCCLGQSESDKSSTHGEAAAETDSRPADE) is disordered. Tudor-like regions lie at residues 133 to 209 (GLYK…ARAR) and 216 to 283 (DLEV…IERP). Lys-279 participates in a covalent cross-link: Glycyl lysine isopeptide (Lys-Gly) (interchain with G-Cter in SUMO2). At Ser-287 the chain carries Phosphoserine. Residues 296 to 301 (RKSGPS) form a linker region. Residue Ser-298 is modified to Phosphoserine; by PKA. A PHD-type zinc finger spans residues 310–366 (NRLCRVCACHLCGGRQDPDKQLMCDECDMAFHIYCLDPPLSSVPSEDEWYCPECRND). Histone H3R2me0 binding stretches follow at residues 333–337 (CDECD) and 353–355 (PSE). At Ser-368 the chain carries Phosphoserine. Lys-385 is covalently cross-linked (Glycyl lysine isopeptide (Lys-Gly) (interchain with G-Cter in SUMO2)). Lys-399 bears the N6-acetyllysine mark. In terms of domain architecture, YDG spans 419-582 (GPIPGIPVGT…FLVWRYLLRR (164 aa)). The required to promote base flipping stretch occupies residues 445 to 446 (HV). Residues 463–464 (AG) and Asp-469 each bind DNA. 2 required for formation of a 5-methylcytosine-binding pocket regions span residues 466-469 (YEDD) and 478-481 (YTGS). Lys-546 carries the post-translational modification N6-acetyllysine; alternate. A Glycyl lysine isopeptide (Lys-Gly) (interchain with G-Cter in SUMO2); alternate cross-link involves residue Lys-546. The segment covering 618-629 (REREKENSKREE) has biased composition (basic and acidic residues). Positions 618–673 (REREKENSKREEEEQQEGGFASPRTGKGKWKRKSAGGGPSRAGSPRRTSKKTKVEP) are disordered. Position 639 is a phosphoserine; by CDK1 (Ser-639). A Phosphoserine modification is found at Ser-651. Residue Lys-670 forms a Glycyl lysine isopeptide (Lys-Gly) (interchain with G-Cter in SUMO2) linkage. 2 positions are modified to phosphoserine: Ser-707 and Ser-709. An RING-type zinc finger spans residues 724-763 (CICCQELVFRPITTVCQHNVCKDCLDRSFRAQVFSCPACR).

In terms of assembly, interacts with DNMT3A and DNMT3B. Interacts with DNMT1; the interaction is direct. Interacts with USP7; leading to its deubiquitination. Interacts with histone H3. Interacts with HDAC1, but not with HDAC2. Interacts with BLTP3A. Interacts with PML. Interacts with EHMT2. Binds hemimethylated CpG containing oligonucleotides. Interacts with ZNF263; recruited to the SIX3 promoter along with other proteins involved in chromatin modification and transcriptional corepression where it contributes to transcriptional repression. Interacts with UHRF2. Interacts with FANCD2. Interacts with TET1 isoform 2; this interaction induces the recruitment of TET1 isoform 2 to replicating heterochromatin. Post-translationally, phosphorylation at Ser-298 of the linker region decreases the binding to H3K9me3. Phosphorylation at Ser-639 by CDK1 during M phase impairs interaction with USP7, preventing deubiquitination and leading to degradation by the proteasome. Ubiquitinated; which leads to proteasomal degradation. Autoubiquitinated; interaction with USP7 leads to deubiquitination and prevents degradation. Ubiquitination and degradation takes place during M phase, when phosphorylation at Ser-639 prevents interaction with USP7 and subsequent deubiquitination. Polyubiquitination may be stimulated by DNA damage. Expressed in thymus, bone marrow, testis, lung and heart. Overexpressed in breast cancer.

It localises to the nucleus. It carries out the reaction S-ubiquitinyl-[E2 ubiquitin-conjugating enzyme]-L-cysteine + [acceptor protein]-L-lysine = [E2 ubiquitin-conjugating enzyme]-L-cysteine + N(6)-ubiquitinyl-[acceptor protein]-L-lysine.. It functions in the pathway protein modification; protein ubiquitination. In terms of biological role, multidomain protein that acts as a key epigenetic regulator by bridging DNA methylation and chromatin modification. Specifically recognizes and binds hemimethylated DNA at replication forks via its YDG domain and recruits DNMT1 methyltransferase to ensure faithful propagation of the DNA methylation patterns through DNA replication. In addition to its role in maintenance of DNA methylation, also plays a key role in chromatin modification: through its tudor-like regions and PHD-type zinc fingers, specifically recognizes and binds histone H3 trimethylated at 'Lys-9' (H3K9me3) and unmethylated at 'Arg-2' (H3R2me0), respectively, and recruits chromatin proteins. Enriched in pericentric heterochromatin where it recruits different chromatin modifiers required for this chromatin replication. Also localizes to euchromatic regions where it negatively regulates transcription possibly by impacting DNA methylation and histone modifications. Has E3 ubiquitin-protein ligase activity by mediating the ubiquitination of target proteins such as histone H3 and PML. It is still unclear how E3 ubiquitin-protein ligase activity is related to its role in chromatin in vivo. Plays a role in DNA repair by cooperating with UHRF2 to ensure recruitment of FANCD2 to interstrand cross-links (ICLs) leading to FANCD2 activation. Acts as a critical player of proper spindle architecture by catalyzing the 'Lys-63'-linked ubiquitination of KIF11, thereby controlling KIF11 localization on the spindle. This is E3 ubiquitin-protein ligase UHRF1 (UHRF1) from Homo sapiens (Human).